We begin with the raw amino-acid sequence, 81 residues long: Fungal defensin micasin (81 aa).

The N-terminal stretch at 1–21 (MQFTKLATILLVSLMGSAAIA) is a signal peptide. Residues 22 to 43 (APATNNAAVDAAADATPAVEKR) constitute a propeptide that is removed on maturation. Disulfide bonds link cysteine 47-cysteine 68, cysteine 54-cysteine 76, and cysteine 58-cysteine 78.

The protein belongs to the invertebrate defensin family.

The protein localises to the secreted. In terms of biological role, antibacterial peptide with potent activity against both Gram-positive and Gram-negative bacteria. May kill bacteria via an intracellular action mode to affect protein folding. Does not show effects on tested filamentous fungi or on the yeast S.cerevisiae. Does not act by destroying the membrane integrity, which is consistent with its nonamphiphilic architecture. Acts more rapidly than vancomycin, suggesting it does not act by inhibiting cell-wall biosynthesis. Does not cause hemolysis and has no cytotoxic effect on HEK cells. In vivo, is as efficient as vancomycin to protect mouse peritonitis models from S.aureus and P.aeruginosa infections. The chain is Fungal defensin micasin from Arthroderma otae (Microsporum canis).